The sequence spans 148 residues: Lysozyme C (148 aa).

The first 18 residues, 1-18 (MKAPLLLGLLLLSVTVQG), serve as a signal peptide directing secretion. Residues 19–148 (KVFERCDLAR…VSQYVRNCGV (130 aa)) enclose the C-type lysozyme domain. Cystine bridges form between Cys24–Cys146, Cys48–Cys134, Cys83–Cys99, and Cys95–Cys113. Catalysis depends on residues Glu53 and Asp71.

Belongs to the glycosyl hydrolase 22 family. In terms of assembly, monomer.

The protein resides in the secreted. It carries out the reaction Hydrolysis of (1-&gt;4)-beta-linkages between N-acetylmuramic acid and N-acetyl-D-glucosamine residues in a peptidoglycan and between N-acetyl-D-glucosamine residues in chitodextrins.. Its function is as follows. Lysozymes have primarily a bacteriolytic function; those in tissues and body fluids are associated with the monocyte-macrophage system and enhance the activity of immunoagents. This chain is Lysozyme C (LYZ), found in Leptonychotes weddellii (Weddell seal).